A 747-amino-acid polypeptide reads, in one-letter code: Histone-lysine N-methyltransferase EZH1 (747 aa).

The tract at residues 188-231 is disordered; it reads DEEEDGHNDPSDGKQDDSKEDLPVTRKRKRHAIEGNKKSSKKQF. Positions 194–211 are enriched in basic and acidic residues; it reads HNDPSDGKQDDSKEDLPV. A Glycyl lysine isopeptide (Lys-Gly) (interchain with G-Cter in SUMO2) cross-link involves residue K327. The disordered stretch occupies residues 368–414; the sequence is VSASCSNASASAMAETKEGDSDRDTGNDWASSSSEANSRCQTPTKQK. The segment covering 369 to 381 has biased composition (low complexity); the sequence is SASCSNASASAMA. Basic and acidic residues predominate over residues 382-393; sequence ETKEGDSDRDTG. Residues 395 to 414 are compositionally biased toward polar residues; sequence DWASSSSEANSRCQTPTKQK. The Nuclear localization signal motif lies at 491 to 496; sequence QKKKRK. The CXC domain occupies 504 to 606; sequence CRKIQLKKDN…CKVVSCKNCS (103 aa). The SET domain occupies 613–728; sequence KHLLLAPSDV…AGEELFFDYR (116 aa).

The protein belongs to the class V-like SAM-binding methyltransferase superfamily. Histone-lysine methyltransferase family. EZ subfamily. As to quaternary structure, component of the PRC2/EED-EZH1 complex, which includes EED, EZH1, SUZ12, RBBP4 and AEBP2. The PRC2/EED-EZH1 is less abundant than the PRC2/EED-EZH2 complex, has weak methyltransferase activity and compacts chromatin in the absence of the methyltransferase cofactor S-adenosyl-L-methionine (SAM). Interacts with EZHIP; the interaction blocks EZH1 methyltransferase activity. As to expression, expressed at high levels in kidney, adrenal gland, testis and brain.

It is found in the nucleus. The enzyme catalyses L-lysyl(27)-[histone H3] + 3 S-adenosyl-L-methionine = N(6),N(6),N(6)-trimethyl-L-lysyl(27)-[histone H3] + 3 S-adenosyl-L-homocysteine + 3 H(+). In terms of biological role, polycomb group (PcG) protein. Catalytic subunit of the PRC2/EED-EZH1 complex, which methylates 'Lys-27' of histone H3, leading to transcriptional repression of the affected target gene. Able to mono-, di- and trimethylate 'Lys-27' of histone H3 to form H3K27me1, H3K27me2 and H3K27me3, respectively. Required for embryonic stem cell derivation and self-renewal, suggesting that it is involved in safeguarding embryonic stem cell identity. Compared to EZH2-containing complexes, it is less abundant in embryonic stem cells, has weak methyltransferase activity and plays a less critical role in forming H3K27me3, which is required for embryonic stem cell identity and proper differentiation. The protein is Histone-lysine N-methyltransferase EZH1 (Ezh1) of Mus musculus (Mouse).